The primary structure comprises 287 residues: ATP synthase gamma chain (287 aa).

Belongs to the ATPase gamma chain family. As to quaternary structure, F-type ATPases have 2 components, CF(1) - the catalytic core - and CF(0) - the membrane proton channel. CF(1) has five subunits: alpha(3), beta(3), gamma(1), delta(1), epsilon(1). CF(0) has three main subunits: a, b and c.

The protein resides in the cell inner membrane. Functionally, produces ATP from ADP in the presence of a proton gradient across the membrane. The gamma chain is believed to be important in regulating ATPase activity and the flow of protons through the CF(0) complex. The protein is ATP synthase gamma chain of Shigella sonnei (strain Ss046).